Reading from the N-terminus, the 327-residue chain is Probable cell division protein WhiA (327 aa).

Positions 275–308 form a DNA-binding region, H-T-H motif; that stretch reads SLEELGRLADPVMTKDAVAGRIRRLLSMADRKAK. The disordered stretch occupies residues 307–327; it reads AKTEGIPDTESAVTPELLEEA.

This sequence belongs to the WhiA family.

Functionally, involved in cell division and chromosome segregation. The polypeptide is Probable cell division protein WhiA (Mycobacteroides abscessus (strain ATCC 19977 / DSM 44196 / CCUG 20993 / CIP 104536 / JCM 13569 / NCTC 13031 / TMC 1543 / L948) (Mycobacterium abscessus)).